The following is a 198-amino-acid chain: 3-isopropylmalate dehydratase small subunit (198 aa).

The protein belongs to the LeuD family. LeuD type 1 subfamily. Heterodimer of LeuC and LeuD.

It carries out the reaction (2R,3S)-3-isopropylmalate = (2S)-2-isopropylmalate. Its pathway is amino-acid biosynthesis; L-leucine biosynthesis; L-leucine from 3-methyl-2-oxobutanoate: step 2/4. In terms of biological role, catalyzes the isomerization between 2-isopropylmalate and 3-isopropylmalate, via the formation of 2-isopropylmaleate. In Mycobacterium marinum (strain ATCC BAA-535 / M), this protein is 3-isopropylmalate dehydratase small subunit.